The sequence spans 587 residues: Sulfite reductase [NADPH] hemoprotein beta-component (587 aa).

The segment covering 1–13 (MQSTDNDLSQSPP) has biased composition (polar residues). The tract at residues 1–20 (MQSTDNDLSQSPPKLSADEQ) is disordered. Residues cysteine 439, cysteine 445, cysteine 484, and cysteine 488 each contribute to the [4Fe-4S] cluster site. Residue cysteine 488 participates in siroheme binding.

Belongs to the nitrite and sulfite reductase 4Fe-4S domain family. Alpha(8)-beta(8). The alpha component is a flavoprotein, the beta component is a hemoprotein. It depends on siroheme as a cofactor. The cofactor is [4Fe-4S] cluster.

It carries out the reaction hydrogen sulfide + 3 NADP(+) + 3 H2O = sulfite + 3 NADPH + 4 H(+). It functions in the pathway sulfur metabolism; hydrogen sulfide biosynthesis; hydrogen sulfide from sulfite (NADPH route): step 1/1. In terms of biological role, component of the sulfite reductase complex that catalyzes the 6-electron reduction of sulfite to sulfide. This is one of several activities required for the biosynthesis of L-cysteine from sulfate. This chain is Sulfite reductase [NADPH] hemoprotein beta-component, found in Bordetella petrii (strain ATCC BAA-461 / DSM 12804 / CCUG 43448).